Reading from the N-terminus, the 618-residue chain is DNA mismatch repair protein MutL (618 aa).

Over residues Ala366–Gly381 the composition is skewed to low complexity. Residues Ala366–Lys405 are disordered. Over residues Gly382–Ser392 the composition is skewed to gly residues.

Belongs to the DNA mismatch repair MutL/HexB family.

In terms of biological role, this protein is involved in the repair of mismatches in DNA. It is required for dam-dependent methyl-directed DNA mismatch repair. May act as a 'molecular matchmaker', a protein that promotes the formation of a stable complex between two or more DNA-binding proteins in an ATP-dependent manner without itself being part of a final effector complex. The polypeptide is DNA mismatch repair protein MutL (Salmonella agona (strain SL483)).